The primary structure comprises 271 residues: Monalysin (271 aa).

Positions 1–33 (MTIKEELGQPQSHSIELDEVSKEAASTRAALTS) are excised as a propeptide. Positions 102–170 (IPQNVTTTLS…FTDTTEMKGP (69 aa)) are pore-forming domain.

Pro-Monalysin forms a stable donut-like 18-mer complex composed of two disk-shaped nonamers held together by N-terminal swapping of the pro-peptides. After proteolytic cleavage, the inactive 18-mer complex probably dissociates into two disk-shaped active nonamers in which the transmembrane segments are unmasked and ready to engage the conformational change leading to the pore formation into the target membrane. Multimerizes into circular-like structures and barrel-like aggregates. Requires N-terminal cleavage to become fully active. The metalloprotease AprA can induce the rapid cleavage of pro-Monalysin into its active form. Can also be processed by trypsin.

The protein resides in the secreted. It is found in the host cell membrane. Pore-forming toxin that contributes to the virulence of P.entomophila against Drosophila, playing an important role in host intestinal damage and lethality. Displays cytolytic and hemolytic activity. The chain is Monalysin from Pseudomonas entomophila (strain L48).